The primary structure comprises 284 residues: MDAIKKKMQMLKLDKENAIDRAEQAEADKKQAEDRCKQLEEEQQALQKKLKGTEDEVEKYSESVKEAQEKLEQAEKKATDAEADVASLNRRIQLVEEELDRAQERLATALQKLEEAEKAADESERGMKVIENRAMKDEEKMELQEMQLKEAKHIAEDSDRKYEEVARKLVILEGELERSEERAEVAESKCGDLEEELKIVTNNLKSLEAQADKYSTKEDKYEEEIKLLEEKLKEAETRAEFAERSVAKLEKTIDDLEDEVYAQKMKYKAISEELDNALNDITSL.

Residue M1 is modified to N-acetylmethionine. The tract at residues 1–65 is disordered; that stretch reads MDAIKKKMQM…EVEKYSESVK (65 aa). The stretch at 1 to 284 forms a coiled coil; that stretch reads MDAIKKKMQM…DNALNDITSL (284 aa). 2 stretches are compositionally biased toward basic and acidic residues: residues 12–40 and 51–65; these read KLDK…KQLE and KGTE…ESVK. Phosphothreonine is present on T53. S61 carries the phosphoserine; by PIK3CG modification. Position 79 is a phosphothreonine (T79). S87 carries the phosphoserine modification. Residue T108 is modified to Phosphothreonine. The disordered stretch occupies residues 117–136; the sequence is EKAADESERGMKVIENRAMK. Phosphoserine is present on residues S158, S206, and S215. Position 252 is a phosphothreonine (T252). Y261 is modified (phosphotyrosine). A Phosphoserine modification is found at S271. At T282 the chain carries Phosphothreonine. Position 283 is a phosphoserine (S283).

This sequence belongs to the tropomyosin family. As to quaternary structure, homodimer. Heterodimer of an alpha (TPM1, TPM3 or TPM4) and a beta (TPM2) chain. Post-translationally, phosphorylated on Ser-61 by PIK3CG. Phosphorylation on Ser-61 is required for ADRB2 internalization. Present in primary breast cancer tissue, absent from normal breast tissue.

It localises to the cytoplasm. The protein resides in the cytoskeleton. Binds to actin filaments in muscle and non-muscle cells. Plays a central role, in association with the troponin complex, in the calcium dependent regulation of vertebrate striated muscle contraction. Smooth muscle contraction is regulated by interaction with caldesmon. In non-muscle cells is implicated in stabilizing cytoskeleton actin filaments. The non-muscle isoform may have a role in agonist-mediated receptor internalization. The chain is Tropomyosin beta chain (TPM2) from Homo sapiens (Human).